A 258-amino-acid polypeptide reads, in one-letter code: Imidazole glycerol phosphate synthase subunit HisF (258 aa).

Active-site residues include D11 and D130.

Belongs to the HisA/HisF family. Heterodimer of HisH and HisF.

It localises to the cytoplasm. The enzyme catalyses 5-[(5-phospho-1-deoxy-D-ribulos-1-ylimino)methylamino]-1-(5-phospho-beta-D-ribosyl)imidazole-4-carboxamide + L-glutamine = D-erythro-1-(imidazol-4-yl)glycerol 3-phosphate + 5-amino-1-(5-phospho-beta-D-ribosyl)imidazole-4-carboxamide + L-glutamate + H(+). It participates in amino-acid biosynthesis; L-histidine biosynthesis; L-histidine from 5-phospho-alpha-D-ribose 1-diphosphate: step 5/9. IGPS catalyzes the conversion of PRFAR and glutamine to IGP, AICAR and glutamate. The HisF subunit catalyzes the cyclization activity that produces IGP and AICAR from PRFAR using the ammonia provided by the HisH subunit. In Shigella dysenteriae serotype 1 (strain Sd197), this protein is Imidazole glycerol phosphate synthase subunit HisF.